The primary structure comprises 505 residues: Endoglucanase 5 (505 aa).

Residues 1-31 form the signal peptide; it reads MWMRRNQIVRKLTLGVVTTVLGMSLSFSALS. The catalytic stretch occupies residues 32 to 334; the sequence is ATPVETHGQL…REQIRAGANL (303 aa). Residues H64, 68-69, Y95, and H130 contribute to the substrate site; that span reads WF. E168 (proton donor) is an active-site residue. Y230 contributes to the substrate binding site. E256 serves as the catalytic Nucleophile. Substrate contacts are provided by residues 262–263, W290, and 295–297; these read AS and KSE. Residues 332-355 form a disordered region; it reads ANLGGGDTPTTPTEPTNPGNGTTG. Residues 335–352 are linker; the sequence is GGGDTPTTPTEPTNPGNG. The span at 339 to 355 shows a compositional bias: low complexity; it reads TPTTPTEPTNPGNGTTG. Residues 353–505 form the CBM3 domain; sequence TTGDVVLQYR…KGTLVWGVEP (153 aa).

Belongs to the glycosyl hydrolase 5 (cellulase A) family.

The protein resides in the secreted. The enzyme catalyses Endohydrolysis of (1-&gt;4)-beta-D-glucosidic linkages in cellulose, lichenin and cereal beta-D-glucans.. Its function is as follows. Endoglucanase with some exoglucanase activity. The chain is Endoglucanase 5 (celV) from Pectobacterium carotovorum subsp. carotovorum (Erwinia carotovora subsp. carotovora).